The following is a 314-amino-acid chain: Thymidylate synthase (314 aa).

Residues R21 and 176 to 177 (RR) contribute to the dUMP site. The Nucleophile role is filled by C196. DUMP contacts are provided by residues 216–219 (RSAD), N227, and 257–259 (HLY). (6R)-5,10-methylene-5,6,7,8-tetrahydrofolate is bound at residue D219. A (6R)-5,10-methylene-5,6,7,8-tetrahydrofolate-binding site is contributed by S313.

Belongs to the thymidylate synthase family. Bacterial-type ThyA subfamily. Homodimer.

It is found in the cytoplasm. It catalyses the reaction dUMP + (6R)-5,10-methylene-5,6,7,8-tetrahydrofolate = 7,8-dihydrofolate + dTMP. It participates in pyrimidine metabolism; dTTP biosynthesis. Functionally, catalyzes the reductive methylation of 2'-deoxyuridine-5'-monophosphate (dUMP) to 2'-deoxythymidine-5'-monophosphate (dTMP) while utilizing 5,10-methylenetetrahydrofolate (mTHF) as the methyl donor and reductant in the reaction, yielding dihydrofolate (DHF) as a by-product. This enzymatic reaction provides an intracellular de novo source of dTMP, an essential precursor for DNA biosynthesis. The polypeptide is Thymidylate synthase (Listeria monocytogenes serotype 4b (strain F2365)).